Consider the following 422-residue polypeptide: Glutamate-1-semialdehyde 2,1-aminomutase (422 aa).

N6-(pyridoxal phosphate)lysine is present on lysine 264.

Belongs to the class-III pyridoxal-phosphate-dependent aminotransferase family. HemL subfamily. In terms of assembly, homodimer. It depends on pyridoxal 5'-phosphate as a cofactor.

The protein localises to the cytoplasm. It carries out the reaction (S)-4-amino-5-oxopentanoate = 5-aminolevulinate. It functions in the pathway porphyrin-containing compound metabolism; protoporphyrin-IX biosynthesis; 5-aminolevulinate from L-glutamyl-tRNA(Glu): step 2/2. In Clostridium kluyveri (strain ATCC 8527 / DSM 555 / NBRC 12016 / NCIMB 10680 / K1), this protein is Glutamate-1-semialdehyde 2,1-aminomutase.